A 265-amino-acid polypeptide reads, in one-letter code: uncharacterized protein (265 aa).

The signal sequence occupies residues 1-22 (MGYFKRVLLYIIVMVLSVFIIG). Cys-23 carries N-palmitoyl cysteine lipidation. The S-diacylglycerol cysteine moiety is linked to residue Cys-23.

It belongs to the staphylococcal tandem lipoprotein family.

It is found in the cell membrane. This is an uncharacterized protein from Staphylococcus aureus (strain MSSA476).